A 275-amino-acid polypeptide reads, in one-letter code: 4-deoxy-L-threo-5-hexosulose-uronate ketol-isomerase (275 aa).

Residues histidine 193, histidine 195, glutamate 200, and histidine 242 each contribute to the Zn(2+) site.

The protein belongs to the KduI family. Zn(2+) serves as cofactor.

It catalyses the reaction 5-dehydro-4-deoxy-D-glucuronate = 3-deoxy-D-glycero-2,5-hexodiulosonate. The protein operates within glycan metabolism; pectin degradation; 2-dehydro-3-deoxy-D-gluconate from pectin: step 4/5. In terms of biological role, catalyzes the isomerization of 5-dehydro-4-deoxy-D-glucuronate to 3-deoxy-D-glycero-2,5-hexodiulosonate. The sequence is that of 4-deoxy-L-threo-5-hexosulose-uronate ketol-isomerase from Bacillus licheniformis (strain ATCC 14580 / DSM 13 / JCM 2505 / CCUG 7422 / NBRC 12200 / NCIMB 9375 / NCTC 10341 / NRRL NRS-1264 / Gibson 46).